Reading from the N-terminus, the 381-residue chain is Chorismate synthase (381 aa).

2 residues coordinate NADP(+): arginine 41 and arginine 47. FMN contacts are provided by residues 127–129, 247–248, glycine 291, 306–310, and arginine 332; these read RAS, QA, and KPIPT.

This sequence belongs to the chorismate synthase family. In terms of assembly, homotetramer. FMNH2 is required as a cofactor.

It catalyses the reaction 5-O-(1-carboxyvinyl)-3-phosphoshikimate = chorismate + phosphate. It functions in the pathway metabolic intermediate biosynthesis; chorismate biosynthesis; chorismate from D-erythrose 4-phosphate and phosphoenolpyruvate: step 7/7. Its function is as follows. Catalyzes the anti-1,4-elimination of the C-3 phosphate and the C-6 proR hydrogen from 5-enolpyruvylshikimate-3-phosphate (EPSP) to yield chorismate, which is the branch point compound that serves as the starting substrate for the three terminal pathways of aromatic amino acid biosynthesis. This reaction introduces a second double bond into the aromatic ring system. The sequence is that of Chorismate synthase from Anaeromyxobacter dehalogenans (strain 2CP-C).